A 161-amino-acid polypeptide reads, in one-letter code: MTKGPVRLDVAVSYALPRAGLPSAVSFRKWVAAALKGRIREADLAVRVVDEKEGCSLNHHYRGKDYATNVLSFPAELPEGLPKGIKMPLLGDLVICAPVVAREAAEQGKSLAAHYAHLTVHGTLHLLGWDHEDDKEAEAMEQLEREILADLGIDDPYAGEH.

Zn(2+) contacts are provided by His-121, His-125, and His-131.

This sequence belongs to the endoribonuclease YbeY family. It depends on Zn(2+) as a cofactor.

Its subcellular location is the cytoplasm. Single strand-specific metallo-endoribonuclease involved in late-stage 70S ribosome quality control and in maturation of the 3' terminus of the 16S rRNA. This Xanthomonas axonopodis pv. citri (strain 306) protein is Endoribonuclease YbeY.